The following is a 615-amino-acid chain: MSVTQKKTEISTTTTYEGESRPSSGMSGFSYSAKIHPRTSGYINRSSQSPFRSSMGSNAAYTRSYDFSYGATAMPGRYANISSTGVNHVKANREREKQDMRDLNERFANYIEKVRFLEAQNKKLAGELEELKSKWGKETSAIKEMYETELEEARKLIDATNKEKITLDVRVTELIDQLERQQKDLEESRTYHQIDQEQIARQNQQLADLEGEISMLRRSIESLEKEKMRQSNILAKMNDEMEKMRMDLNNETINHLDAENRRQTLEEELEFQKDVHAQELKELAALAYRDTTAENREFWRNELAQAIRDIQQEYDAKCDQMRGDIEAYYNLKVQEFRTGATKQNMEVTRNKEENTKLKSNMTEIRNRLADLEARNAQLERTNQDLLRDLEEKDRQNELESCQYKEEITKLRGEMESILKELQDLMDIKLSLELEIAAYRKLLEGEESRVGMKQIVEQVVGARPNEAEVLSTILTRSEGGYEATGDSQISMKMMRGELAAKTTYQRTSKGSVSIKEADSQGCFIALETKKEENLTGWKIVRKVDDNKVYTYEIPNLVLKTGTVVKIWSKNHQAQARGDDLVSRENDTWGTGSNVVTILQNEKGEDKANYTQNTVYQ.

The disordered stretch occupies residues 1-31 (MSVTQKKTEISTTTTYEGESRPSSGMSGFSY). The tract at residues 1–99 (MSVTQKKTEI…KANREREKQD (99 aa)) is head. Positions 21 to 30 (RPSSGMSGFS) are enriched in polar residues. Residues 96-449 (EKQDMRDLNE…KLLEGEESRV (354 aa)) form the IF rod domain. Residues 100–135 (MRDLNERFANYIEKVRFLEAQNKKLAGELEELKSKW) are coil 1A. Residues 136-145 (GKETSAIKEM) form a linker 1 region. The coil 1B stretch occupies residues 146-284 (YETELEEARK…VHAQELKELA (139 aa)). The segment at 285 to 303 (ALAYRDTTAENREFWRNEL) is linker 12. The tract at residues 304–449 (AQAIRDIQQE…KLLEGEESRV (146 aa)) is coil 2. The interval 450 to 615 (GMKQIVEQVV…ANYTQNTVYQ (166 aa)) is tail. One can recognise an LTD domain in the interval 499–612 (AKTTYQRTSK…EDKANYTQNT (114 aa)).

The protein belongs to the intermediate filament family.

This chain is 70 kDa neurofilament protein, found in Doryteuthis pealeii (Longfin inshore squid).